A 349-amino-acid chain; its full sequence is Ferredoxin--NADP reductase 1 (349 aa).

The FAD site is built by Glu36, Lys44, Tyr48, Ile88, Leu123, Asp290, and Ser331.

This sequence belongs to the ferredoxin--NADP reductase type 2 family. As to quaternary structure, homodimer. It depends on FAD as a cofactor.

It catalyses the reaction 2 reduced [2Fe-2S]-[ferredoxin] + NADP(+) + H(+) = 2 oxidized [2Fe-2S]-[ferredoxin] + NADPH. This Bacillus mycoides (strain KBAB4) (Bacillus weihenstephanensis) protein is Ferredoxin--NADP reductase 1.